The sequence spans 406 residues: Elongation factor Tu (406 aa).

One can recognise a tr-type G domain in the interval 10–215; the sequence is KPHVNVGTIG…AIDEYIPTPV (206 aa). The G1 stretch occupies residues 19 to 26; that stretch reads GHVDHGKT. 19-26 lines the GTP pocket; that stretch reads GHVDHGKT. Threonine 26 lines the Mg(2+) pocket. The G2 stretch occupies residues 61–65; it reads GITIN. The G3 stretch occupies residues 82-85; it reads DCPG. GTP contacts are provided by residues 82-86 and 137-140; these read DCPGH and NKVD. The tract at residues 137–140 is G4; the sequence is NKVD. The interval 175-177 is G5; sequence SAL.

It belongs to the TRAFAC class translation factor GTPase superfamily. Classic translation factor GTPase family. EF-Tu/EF-1A subfamily. In terms of assembly, monomer.

It localises to the cytoplasm. It catalyses the reaction GTP + H2O = GDP + phosphate + H(+). GTP hydrolase that promotes the GTP-dependent binding of aminoacyl-tRNA to the A-site of ribosomes during protein biosynthesis. The protein is Elongation factor Tu of Thermus aquaticus.